We begin with the raw amino-acid sequence, 299 residues long: Leucine zipper transcription factor-like protein 1 (299 aa).

Positions 96–296 form a coiled coil; the sequence is LKLQTDISEL…DLRKRLAKYE (201 aa). The interaction with BSS9 stretch occupies residues 145 to 299; that stretch reads GAAELLNKEI…KRLAKYEPED (155 aa).

Belongs to the LZTFL1 family. As to quaternary structure, self-associates. Interacts with BBS9; the interaction mediates the association of LZTL1 with the BBsome complex and regulates BBSome ciliary trafficking.

The protein localises to the cytoplasm. Its function is as follows. Regulates ciliary localization of the BBSome complex. Together with the BBSome complex, controls SMO ciliary trafficking and contributes to the sonic hedgehog (SHH) pathway regulation. May play a role in neurite outgrowth. May have tumor suppressor function. This chain is Leucine zipper transcription factor-like protein 1 (LZTFL1), found in Bos taurus (Bovine).